The sequence spans 90 residues: uncharacterized protein (90 aa).

The first 20 residues, 1-20 (MEKLFVLVFALALLAFSSDA), serve as a signal peptide directing secretion.

The protein localises to the secreted. This is an uncharacterized protein from Mus musculus (Mouse).